A 578-amino-acid chain; its full sequence is Acyl-coenzyme A synthetase ACSM5, mitochondrial (578 aa).

The transit peptide at 1 to 22 (MRLWLRGLACQALRSSWGVCRI) directs the protein to the mitochondrion. An N6-acetyllysine; alternate modification is found at Lys-96. Residue Lys-96 is modified to N6-succinyllysine; alternate. The residue at position 151 (Lys-151) is an N6-acetyllysine. 229–237 (TSGTTGAPK) is an ATP binding site. Lys-302 carries the N6-acetyllysine; alternate modification. An N6-succinyllysine; alternate modification is found at Lys-302. Residue Lys-335 is modified to N6-acetyllysine. Residues 367–372 (EGYGQS), Asp-454, Arg-469, and Lys-565 contribute to the ATP site.

This sequence belongs to the ATP-dependent AMP-binding enzyme family. Requires Mg(2+) as cofactor. Mn(2+) serves as cofactor.

It localises to the mitochondrion matrix. It carries out the reaction a medium-chain fatty acid + ATP + CoA = a medium-chain fatty acyl-CoA + AMP + diphosphate. Its function is as follows. Catalyzes the activation of fatty acids by CoA to produce an acyl-CoA, the first step in fatty acid metabolism. The protein is Acyl-coenzyme A synthetase ACSM5, mitochondrial (Acsm5) of Mus musculus (Mouse).